The primary structure comprises 1058 residues: Ubiquitin-like modifier-activating enzyme 1 (1058 aa).

The tract at residues 1–47 (MSSSPLSKKRRVSGPDPKPGSNCSPAQSVLSEVPSVPTNGMAKNGSE) is disordered. Ser2 carries the N-acetylserine modification. Ser2 carries the post-translational modification N-acetylalanine. Position 4 is a phosphoserine (Ser4). The Nuclear localization signal signature appears at 5-11 (PLSKKRR). Phosphoserine is present on residues Ser13, Ser21, Ser24, and Ser46. A compositionally biased stretch (polar residues) spans 21–30 (SNCSPAQSVL). At Tyr55 the chain carries Phosphotyrosine. Tandem repeats lie at residues 63-199 (GHEA…GQLF) and 459-611 (GSDL…QVVI). Residues 63-611 (GHEAMKRLQT…GTKGNVQVVI (549 aa)) are 2 approximate repeats. Residues Ala478, Asp504, Arg515, Lys528, and 576–577 (DN) contribute to the ATP site. Lys528 is subject to N6-succinyllysine. Residue Cys632 is the Glycyl thioester intermediate of the active site. Lys671 is modified (N6-acetyllysine). Thr800 bears the Phosphothreonine mark. Phosphoserine occurs at positions 810, 816, 820, and 835. Residue Lys980 is modified to N6-acetyllysine.

The protein belongs to the ubiquitin-activating E1 family. As to quaternary structure, monomer. Interacts with GAN (via BTB domain). ISGylated. As to expression, detected in erythrocytes (at protein level). Ubiquitous.

It localises to the cytoplasm. Its subcellular location is the mitochondrion. The protein localises to the nucleus. It catalyses the reaction ATP + ubiquitin + [E1 ubiquitin-activating enzyme]-L-cysteine = AMP + diphosphate + S-ubiquitinyl-[E1 ubiquitin-activating enzyme]-L-cysteine.. It functions in the pathway protein modification; protein ubiquitination. Its function is as follows. Catalyzes the first step in ubiquitin conjugation to mark cellular proteins for degradation through the ubiquitin-proteasome system. Activates ubiquitin by first adenylating its C-terminal glycine residue with ATP, and thereafter linking this residue to the side chain of a cysteine residue in E1, yielding a ubiquitin-E1 thioester and free AMP. Essential for the formation of radiation-induced foci, timely DNA repair and for response to replication stress. Promotes the recruitment of TP53BP1 and BRCA1 at DNA damage sites. In Homo sapiens (Human), this protein is Ubiquitin-like modifier-activating enzyme 1 (UBA1).